Reading from the N-terminus, the 602-residue chain is Elongation factor 4 (602 aa).

The tr-type G domain maps to 5–187 (DHIRNFAIIA…QIIVSLPAPE (183 aa)). Residues 17-22 (DHGKST) and 134-137 (NKVD) each bind GTP.

This sequence belongs to the TRAFAC class translation factor GTPase superfamily. Classic translation factor GTPase family. LepA subfamily.

The protein resides in the cell inner membrane. The catalysed reaction is GTP + H2O = GDP + phosphate + H(+). Functionally, required for accurate and efficient protein synthesis under certain stress conditions. May act as a fidelity factor of the translation reaction, by catalyzing a one-codon backward translocation of tRNAs on improperly translocated ribosomes. Back-translocation proceeds from a post-translocation (POST) complex to a pre-translocation (PRE) complex, thus giving elongation factor G a second chance to translocate the tRNAs correctly. Binds to ribosomes in a GTP-dependent manner. This is Elongation factor 4 from Pelagibacter ubique (strain HTCC1062).